The chain runs to 784 residues: ATP-dependent zinc metalloprotease FTSH 9, chloroplastic/mitochondrial (784 aa).

3 stretches are compositionally biased toward low complexity: residues 1-12 (MSALQASLLLRP), 24-34 (PLPSSSASFPR), and 42-53 (PLPLRALASEGP). The transit peptide at 1-47 (MSALQASLLLRPLPSPLPPRRRLPLPSSSASFPRAGHHRRLPLPLRA) directs the protein to the chloroplast and mitochondrion. A disordered region spans residues 1 to 71 (MSALQASLLL…DPPPPELPAA (71 aa)). The segment covering 54-69 (QPAPSPAPDPPPPELP) has biased composition (pro residues). The next 2 helical transmembrane spans lie at 104–124 (WVLALAAAVVAAARRFFDWVV) and 267–287 (IFSTVLFTIAVGLMWVMGAAA). Residue 368–375 (GSPGTGKT) coordinates ATP. Zn(2+) is bound at residue H601. E602 is an active-site residue. The Zn(2+) site is built by H605 and D679.

In the N-terminal section; belongs to the AAA ATPase family. This sequence in the C-terminal section; belongs to the peptidase M41 family. It depends on Zn(2+) as a cofactor.

The protein localises to the mitochondrion membrane. It is found in the plastid. Its subcellular location is the chloroplast thylakoid membrane. Functionally, probable ATP-dependent zinc metallopeptidase. The polypeptide is ATP-dependent zinc metalloprotease FTSH 9, chloroplastic/mitochondrial (FTSH9) (Oryza sativa subsp. japonica (Rice)).